Consider the following 555-residue polypeptide: O-fucosyltransferase 20 (555 aa).

Over 1–58 the chain is Cytoplasmic; it reads MALPKNGGNSSSTKKKVSYISVPSQIINSLSSSSLQSLLVSPKKSSRCTNRFSYRNPR. The helical; Signal-anchor for type II membrane protein transmembrane segment at 59–79 threads the bilayer; the sequence is IWFLTLFLVSLFGMLKLGLNV. At 80–555 the chain is on the lumenal side; the sequence is DPISLPFSRY…MCSDRRQQQQ (476 aa). The tract at residues 110-130 is disordered; it reads KNDTQSSSSSEHRKNETLPTE. N111 and N124 each carry an N-linked (GlcNAc...) asparagine glycan. 330–332 is a binding site for substrate; it reads HLR. N371 and N503 each carry an N-linked (GlcNAc...) asparagine glycan. The tract at residues 525 to 555 is disordered; it reads QPELRTGRGGKDVTKHPVSECMCSDRRQQQQ. A compositionally biased stretch (basic and acidic residues) spans 529–555; sequence RTGRGGKDVTKHPVSECMCSDRRQQQQ.

This sequence belongs to the glycosyltransferase GT106 family. As to expression, highly expressed in embryogenic microspore and in vegetative tissues.

It is found in the golgi apparatus membrane. It functions in the pathway glycan metabolism. In terms of biological role, may play a role in the biosynthesis of matrix polysaccharides and contribute to the biomechanics and development of the plant cell wall. This is O-fucosyltransferase 20 from Brassica napus (Rape).